The chain runs to 181 residues: Probable N-acetyltransferase YjcK (181 aa).

Residues 7 to 172 enclose the N-acetyltransferase domain; that stretch reads IYVRPLEVTD…NGVWEDHQVL (166 aa).

This sequence belongs to the acetyltransferase family. RimJ subfamily.

It carries out the reaction an N-terminal L-alpha-aminoacyl-[protein] + acetyl-CoA = N-terminal N(alpha)-acetyl-L-alpha-aminoacyl-[protein] + CoA + H(+). Probable N-terminal protein acetyltransferase. This is Probable N-acetyltransferase YjcK (yjcK) from Bacillus subtilis (strain 168).